A 1963-amino-acid polypeptide reads, in one-letter code: Myosin-4 (1963 aa).

A Myosin N-terminal SH3-like domain is found at 28 to 77 (DSKKNVWIPDPEEGYLAGEITATKGDQVTIVTARGNEVTLKKELVQEMNP). The Myosin motor domain occupies 81 to 787 (EKTEDMSNLS…VLAHLEDIRD (707 aa)). Lys-125 is subject to N6,N6,N6-trimethyllysine. 174 to 181 (GESGAGKT) is a binding site for ATP. 2 actin-binding regions span residues 662–684 (LNNLMTMLNKTHPHFIRCIIPNE) and 766–780 (RIGLTKVFFKAGVLA). Residues 848–1161 (MLKAGKEAEE…LEELGEKLDE (314 aa)) form an alpha-helical tailpiece (S2) region. A coiled-coil region spans residues 848–1963 (MLKAGKEAEE…SPSRARASDF (1116 aa)). Basic and acidic residues-rich tracts occupy residues 970-988 (LRKAESEKQSKDHQIRSLQ) and 1133-1146 (NERQSRSKADRAKS). 2 disordered regions span residues 970–990 (LRKAESEKQSKDHQIRSLQDE) and 1125–1146 (SELEEELENERQSRSKADRAKS). The tract at residues 1162-1173 (QGGATAAQVEVN) is hinge. Positions 1162 to 1963 (QGGATAAQVE…SPSRARASDF (802 aa)) are light meromyosin (LMM). Disordered regions lie at residues 1317 to 1336 (LTSQLEEARRTADEEARERQ) and 1912 to 1963 (LEDA…ASDF). Positions 1322 to 1336 (EEARRTADEEARERQ) are enriched in basic and acidic residues.

This sequence belongs to the TRAFAC class myosin-kinesin ATPase superfamily. Myosin family. Muscle myosin is a hexameric protein that consists of 2 heavy chain subunits (MHC), 2 alkali light chain subunits (MLC) and 2 regulatory light chain subunits (MLC-2). Forms a complex composed of chaperone unc-45, unc-54 and ubiquitin-protein ligase ufd-2; promotes poly-ubiquitination of unfolded unc-54. Within the complex interacts with unc-45 (via UCS domain) and ufd-2. Interacts with itr-1 (via c-terminal coiled coil domain). Unfolded unc-54 is poly-ubiquitinated by ufd-2.

It is found in the cytoplasm. Its subcellular location is the myofibril. Its function is as follows. Required for muscle contraction. The chain is Myosin-4 (unc-54) from Caenorhabditis elegans.